Here is a 175-residue protein sequence, read N- to C-terminus: Crossover junction endodeoxyribonuclease RuvC (175 aa).

Residues aspartate 7, glutamate 68, and aspartate 141 contribute to the active site. Aspartate 7, glutamate 68, and aspartate 141 together coordinate Mg(2+).

This sequence belongs to the RuvC family. As to quaternary structure, homodimer which binds Holliday junction (HJ) DNA. The HJ becomes 2-fold symmetrical on binding to RuvC with unstacked arms; it has a different conformation from HJ DNA in complex with RuvA. In the full resolvosome a probable DNA-RuvA(4)-RuvB(12)-RuvC(2) complex forms which resolves the HJ. It depends on Mg(2+) as a cofactor.

The protein resides in the cytoplasm. The catalysed reaction is Endonucleolytic cleavage at a junction such as a reciprocal single-stranded crossover between two homologous DNA duplexes (Holliday junction).. Its function is as follows. The RuvA-RuvB-RuvC complex processes Holliday junction (HJ) DNA during genetic recombination and DNA repair. Endonuclease that resolves HJ intermediates. Cleaves cruciform DNA by making single-stranded nicks across the HJ at symmetrical positions within the homologous arms, yielding a 5'-phosphate and a 3'-hydroxyl group; requires a central core of homology in the junction. The consensus cleavage sequence is 5'-(A/T)TT(C/G)-3'. Cleavage occurs on the 3'-side of the TT dinucleotide at the point of strand exchange. HJ branch migration catalyzed by RuvA-RuvB allows RuvC to scan DNA until it finds its consensus sequence, where it cleaves and resolves the cruciform DNA. This is Crossover junction endodeoxyribonuclease RuvC from Salinispora arenicola (strain CNS-205).